The following is a 730-amino-acid chain: Wall-associated receptor kinase-like 3 (730 aa).

The first 25 residues, 1 to 25 (MKTKTYNFRYIVASVLTLLMNGSSA), serve as a signal peptide directing secretion. Topologically, residues 26 to 357 (ATPPNSNSSS…AKLAHVLRGV (332 aa)) are extracellular. Asn-32, Asn-38, Asn-68, Asn-90, Asn-119, Asn-132, Asn-212, Asn-233, and Asn-269 each carry an N-linked (GlcNAc...) asparagine glycan. The tract at residues 283–340 (CLCRYGYFSRMSYRSCYCGSGYRGNPYIRGGCIDIDECEVPNKCGEDTCVNMAGRYSC) is atypical EGF-like. 3 disulfide bridges follow: Cys-285–Cys-298, Cys-320–Cys-331, and Cys-326–Cys-340. The chain crosses the membrane as a helical span at residues 358–378 (LIGLLGLLFFVIGIFGLYKFI). Residues 379 to 730 (RKRRRIIRSM…LMEINRIYDS (352 aa)) lie on the Cytoplasmic side of the membrane. One can recognise a Protein kinase domain in the interval 428 to 699 (FSIDRVLGQG…REVSIKLERI (272 aa)). ATP is bound by residues 434 to 442 (LGQGGQGTV) and Lys-456. Asp-553 functions as the Proton acceptor in the catalytic mechanism. The segment at 703 to 730 (PKDLDVHTENEEEEEEDQLMEINRIYDS) is disordered. The segment covering 712-721 (NEEEEEEDQL) has biased composition (acidic residues).

This sequence belongs to the protein kinase superfamily. Ser/Thr protein kinase family. In terms of tissue distribution, preferentially expressed in roots and flowers.

The protein resides in the membrane. It carries out the reaction L-seryl-[protein] + ATP = O-phospho-L-seryl-[protein] + ADP + H(+). It catalyses the reaction L-threonyl-[protein] + ATP = O-phospho-L-threonyl-[protein] + ADP + H(+). In terms of biological role, serine/threonine-protein kinase that may function as a signaling receptor of extracellular matrix component. The polypeptide is Wall-associated receptor kinase-like 3 (WAKL3) (Arabidopsis thaliana (Mouse-ear cress)).